A 160-amino-acid polypeptide reads, in one-letter code: MTKKKAHKPGSATIALNKRARHEYFIEEEFEAGLALQGWEVKSLRAGKANISDSYVLLRDGEAYLFGANFTPMAVASTHVVCDPTRTRKLLLNQRELDSLYGRVNREGYTVVALSLYWKNAWCKVKIGVAKGKKQHDKRSDLKEREWQLDKARIMKNAGR.

This sequence belongs to the SmpB family.

It is found in the cytoplasm. Its function is as follows. Required for rescue of stalled ribosomes mediated by trans-translation. Binds to transfer-messenger RNA (tmRNA), required for stable association of tmRNA with ribosomes. tmRNA and SmpB together mimic tRNA shape, replacing the anticodon stem-loop with SmpB. tmRNA is encoded by the ssrA gene; the 2 termini fold to resemble tRNA(Ala) and it encodes a 'tag peptide', a short internal open reading frame. During trans-translation Ala-aminoacylated tmRNA acts like a tRNA, entering the A-site of stalled ribosomes, displacing the stalled mRNA. The ribosome then switches to translate the ORF on the tmRNA; the nascent peptide is terminated with the 'tag peptide' encoded by the tmRNA and targeted for degradation. The ribosome is freed to recommence translation, which seems to be the essential function of trans-translation. In Citrobacter koseri (strain ATCC BAA-895 / CDC 4225-83 / SGSC4696), this protein is SsrA-binding protein.